A 343-amino-acid polypeptide reads, in one-letter code: Putative mediator of RNA polymerase II transcription subunit 4 (343 aa).

Positions 86–125 (LKKLEKHQKIQKEITEIQKEIEEKDKLISTLALNLKDIES) form a coiled coil. The disordered stretch occupies residues 247–343 (ISSPFSIGGN…DEESEEVEWD (97 aa)). Low complexity predominate over residues 271–316 (QQQQQQQQQPQQQLSQSQQSQQQTESELQPIQSILQPPQQLNIDLD). Over residues 317 to 343 (LNPDLDSSGDDDDEDDDDEESEEVEWD) the composition is skewed to acidic residues.

This sequence belongs to the Mediator complex subunit 4 family. In terms of assembly, component of the Mediator complex.

Its subcellular location is the nucleus. Functionally, component of the Mediator complex, a coactivator involved in the regulated transcription of nearly all RNA polymerase II-dependent genes. Mediator functions as a bridge to convey information from gene-specific regulatory proteins to the basal RNA polymerase II transcription machinery. Mediator is recruited to promoters by direct interactions with regulatory proteins and serves as a scaffold for the assembly of a functional preinitiation complex with RNA polymerase II and the general transcription factors. This Dictyostelium discoideum (Social amoeba) protein is Putative mediator of RNA polymerase II transcription subunit 4 (med4).